The following is a 487-amino-acid chain: Glucose starvation modulator protein 1 (487 aa).

The disordered stretch occupies residues 1–75 (MSIRFPEIPG…KRLTPQEKKA (75 aa)). The segment covering 59–68 (SFSSSMTKRL) has biased composition (polar residues). Positions 83–111 (CVFCHSKHLQCSHSRPCQNCIKRNLAHEC) form a DNA-binding region, zn(2)-C6 fungal-type. Residues 122 to 139 (MSTTEVPAVSGESSSESG) show a composition bias toward polar residues. Residues 122 to 158 (MSTTEVPAVSGESSSESGRATGENGSEMGNPPDPQIA) form a disordered region. A PAS domain is found at 348 to 420 (CLLDYENLSR…FRLFESVAVG (73 aa)).

Belongs to the ERT1/acuK family.

It localises to the nucleus. Functionally, transcription factor which regulates nonfermentable carbon utilization. In Clavispora lusitaniae (strain ATCC 42720) (Yeast), this protein is Glucose starvation modulator protein 1 (GSM1).